Consider the following 51-residue polypeptide: Insulin-2 (51 aa).

3 cysteine pairs are disulfide-bonded: C8–C37, C20–C50, and C36–C41.

Belongs to the insulin family. As to quaternary structure, heterodimer of a B chain and an A chain linked by two disulfide bonds.

Its subcellular location is the secreted. Insulin decreases blood glucose concentration. It increases cell permeability to monosaccharides, amino acids and fatty acids. It accelerates glycolysis, the pentose phosphate cycle, and glycogen synthesis in liver. In Katsuwonus pelamis (Skipjack tuna), this protein is Insulin-2.